We begin with the raw amino-acid sequence, 550 residues long: Membrane protein insertase YidC (550 aa).

Residues 3 to 23 (IKRTVLWVIFFMSAVMLFDNW) form a helical membrane-spanning segment. The disordered stretch occupies residues 34 to 73 (FPSATQTKTAAPAAPGSSTTASQPTDLPQTTAAAPGSTTP). Residues 35–73 (PSATQTKTAAPAAPGSSTTASQPTDLPQTTAAAPGSTTP) are compositionally biased toward low complexity. The next 4 helical transmembrane spans lie at 363 to 383 (WGWA…PLSA), 429 to 449 (FGGC…YWVL), 472 to 492 (PYFI…KLNP), and 503 to 523 (MMFM…GLVL).

It belongs to the OXA1/ALB3/YidC family. Type 1 subfamily. Interacts with the Sec translocase complex via SecD. Specifically interacts with transmembrane segments of nascent integral membrane proteins during membrane integration.

It localises to the cell inner membrane. Functionally, required for the insertion and/or proper folding and/or complex formation of integral membrane proteins into the membrane. Involved in integration of membrane proteins that insert both dependently and independently of the Sec translocase complex, as well as at least some lipoproteins. Aids folding of multispanning membrane proteins. The protein is Membrane protein insertase YidC of Paraburkholderia phymatum (strain DSM 17167 / CIP 108236 / LMG 21445 / STM815) (Burkholderia phymatum).